The sequence spans 597 residues: NADH-quinone oxidoreductase subunits H/I (597 aa).

Residues 1 to 405 are NADH-quinone oxidoreductase subunit H; the sequence is MPDLSLFGHD…FPTPPVPADA (405 aa). The next 9 membrane-spanning stretches (helical) occupy residues 12-32, 82-102, 124-144, 170-190, 195-215, 260-280, 286-306, 318-338, and 351-371; these read FWLV…IPLV, PIYL…FAVI, VGVL…VLAG, MALC…SGIV, PTWF…SMVG, ALAT…NLIP, WWGL…FVWL, FMRL…MLVA, and ATGA…GLFL. The tract at residues 406–597 is NADH-quinone oxidoreductase subunit I; it reads HRVDNPKGGL…APAGAKGGAR (192 aa). 4Fe-4S ferredoxin-type domains are found at residues 455–485 and 501–530; these read LNRH…VEGA and RVYQ…MTND. Residues Cys-465, Cys-468, Cys-471, Cys-475, Cys-510, Cys-513, Cys-516, and Cys-520 each coordinate [4Fe-4S] cluster.

In the N-terminal section; belongs to the complex I subunit 1 family. It in the C-terminal section; belongs to the complex I 23 kDa subunit family. As to quaternary structure, NDH-1 is composed of 13 different subunits. Subunits NuoA, H/I, J, K, L, M, N constitute the membrane sector of the complex. [4Fe-4S] cluster serves as cofactor.

The protein localises to the cell membrane. The enzyme catalyses a quinone + NADH + 5 H(+)(in) = a quinol + NAD(+) + 4 H(+)(out). NDH-1 shuttles electrons from NADH, via FMN and iron-sulfur (Fe-S) centers, to quinones in the respiratory chain. The immediate electron acceptor for the enzyme in this species is believed to be ubiquinone. Couples the redox reaction to proton translocation (for every two electrons transferred, four hydrogen ions are translocated across the cytoplasmic membrane), and thus conserves the redox energy in a proton gradient. This subunit may bind ubiquinone. In Nocardia farcinica (strain IFM 10152), this protein is NADH-quinone oxidoreductase subunits H/I (nuoH/I).